The following is a 304-amino-acid chain: Ribonuclease Z (304 aa).

Zn(2+) contacts are provided by His63, His65, Asp67, His68, His143, Asp213, and His271. Asp67 acts as the Proton acceptor in catalysis.

Belongs to the RNase Z family. In terms of assembly, homodimer. Zn(2+) is required as a cofactor.

It carries out the reaction Endonucleolytic cleavage of RNA, removing extra 3' nucleotides from tRNA precursor, generating 3' termini of tRNAs. A 3'-hydroxy group is left at the tRNA terminus and a 5'-phosphoryl group is left at the trailer molecule.. Functionally, zinc phosphodiesterase, which displays some tRNA 3'-processing endonuclease activity. Probably involved in tRNA maturation, by removing a 3'-trailer from precursor tRNA. The chain is Ribonuclease Z from Bacteroides fragilis (strain ATCC 25285 / DSM 2151 / CCUG 4856 / JCM 11019 / LMG 10263 / NCTC 9343 / Onslow / VPI 2553 / EN-2).